The following is a 192-amino-acid chain: Crossover junction endodeoxyribonuclease RuvC (192 aa).

Active-site residues include aspartate 8, glutamate 67, and aspartate 139. Mg(2+) contacts are provided by aspartate 8, glutamate 67, and aspartate 139.

This sequence belongs to the RuvC family. In terms of assembly, homodimer which binds Holliday junction (HJ) DNA. The HJ becomes 2-fold symmetrical on binding to RuvC with unstacked arms; it has a different conformation from HJ DNA in complex with RuvA. In the full resolvosome a probable DNA-RuvA(4)-RuvB(12)-RuvC(2) complex forms which resolves the HJ. The cofactor is Mg(2+).

The protein resides in the cytoplasm. The enzyme catalyses Endonucleolytic cleavage at a junction such as a reciprocal single-stranded crossover between two homologous DNA duplexes (Holliday junction).. Functionally, the RuvA-RuvB-RuvC complex processes Holliday junction (HJ) DNA during genetic recombination and DNA repair. Endonuclease that resolves HJ intermediates. Cleaves cruciform DNA by making single-stranded nicks across the HJ at symmetrical positions within the homologous arms, yielding a 5'-phosphate and a 3'-hydroxyl group; requires a central core of homology in the junction. The consensus cleavage sequence is 5'-(A/T)TT(C/G)-3'. Cleavage occurs on the 3'-side of the TT dinucleotide at the point of strand exchange. HJ branch migration catalyzed by RuvA-RuvB allows RuvC to scan DNA until it finds its consensus sequence, where it cleaves and resolves the cruciform DNA. The protein is Crossover junction endodeoxyribonuclease RuvC of Actinobacillus pleuropneumoniae serotype 5b (strain L20).